We begin with the raw amino-acid sequence, 835 residues long: Pre-mRNA-splicing factor SYF1 (835 aa).

10 HAT repeats span residues 7–38, 46–77, 313–348, 414–456, 458–494, 517–551, 589–623, 628–664, 707–741, and 743–777; these read YILD…HWEA, RSAR…WFRR, ADFD…FEQA, EDFD…VYWS, KSYE…NEFQ, SIID…LLES, NNLH…EVME, ATKE…FEIH, LGPD…LEMS, and SDYT…FELE.

Belongs to the crooked-neck family. As to quaternary structure, associated with the spliceosome.

It localises to the nucleus. Its function is as follows. Involved in pre-mRNA splicing and cell cycle progression. The chain is Pre-mRNA-splicing factor SYF1 (SYF1) from Candida glabrata (strain ATCC 2001 / BCRC 20586 / JCM 3761 / NBRC 0622 / NRRL Y-65 / CBS 138) (Yeast).